Here is a 448-residue protein sequence, read N- to C-terminus: ATP synthase subunit b-delta (448 aa).

The interval 1-168 (MSTFIGQLIG…GSVGAAKRPV (168 aa)) is ATP synthase subunit b. Residues 4–24 (FIGQLIGFAVIVFLVVKYVVP) traverse the membrane as a helical segment. An ATP synthase subunit delta region spans residues 169–448 (PGGYSGMHAA…LSAAALHLPN (280 aa)).

The protein in the N-terminal section; belongs to the ATPase B chain family. It in the C-terminal section; belongs to the ATPase delta chain family. F-type ATPases have 2 components, F(1) - the catalytic core - and F(0) - the membrane proton channel. F(1) has five subunits: alpha(3), beta(3), gamma(1), delta(1), epsilon(1). F(0) has three main subunits: a(1), b(2) and c(10-14). The alpha and beta chains form an alternating ring which encloses part of the gamma chain. F(1) is attached to F(0) by a central stalk formed by the gamma and epsilon chains, while a peripheral stalk is formed by the delta and b chains.

The protein localises to the cell membrane. Functionally, f(1)F(0) ATP synthase produces ATP from ADP in the presence of a proton or sodium gradient. F-type ATPases consist of two structural domains, F(1) containing the extramembraneous catalytic core and F(0) containing the membrane proton channel, linked together by a central stalk and a peripheral stalk. During catalysis, ATP synthesis in the catalytic domain of F(1) is coupled via a rotary mechanism of the central stalk subunits to proton translocation. This fusion protein includes a component of the F(0) channel (subunit b) and of the F(1) subunit (subunit delta). Two copies of subunit b and one of delta together form the peripheral 'stator' stalk which links F(1) to F(0). This Mycobacteroides abscessus (strain ATCC 19977 / DSM 44196 / CCUG 20993 / CIP 104536 / JCM 13569 / NCTC 13031 / TMC 1543 / L948) (Mycobacterium abscessus) protein is ATP synthase subunit b-delta (atpFH).